Reading from the N-terminus, the 259-residue chain is Imidazole glycerol phosphate synthase subunit HisF (259 aa).

Active-site residues include Asp11 and Asp130.

This sequence belongs to the HisA/HisF family. In terms of assembly, heterodimer of HisH and HisF.

The protein localises to the cytoplasm. It carries out the reaction 5-[(5-phospho-1-deoxy-D-ribulos-1-ylimino)methylamino]-1-(5-phospho-beta-D-ribosyl)imidazole-4-carboxamide + L-glutamine = D-erythro-1-(imidazol-4-yl)glycerol 3-phosphate + 5-amino-1-(5-phospho-beta-D-ribosyl)imidazole-4-carboxamide + L-glutamate + H(+). It participates in amino-acid biosynthesis; L-histidine biosynthesis; L-histidine from 5-phospho-alpha-D-ribose 1-diphosphate: step 5/9. Its function is as follows. IGPS catalyzes the conversion of PRFAR and glutamine to IGP, AICAR and glutamate. The HisF subunit catalyzes the cyclization activity that produces IGP and AICAR from PRFAR using the ammonia provided by the HisH subunit. This Lactococcus lactis subsp. cremoris (strain MG1363) protein is Imidazole glycerol phosphate synthase subunit HisF.